Consider the following 301-residue polypeptide: Quinolinate synthase (301 aa).

Residues His-21 and Ser-38 each coordinate iminosuccinate. [4Fe-4S] cluster is bound at residue Cys-83. Iminosuccinate-binding positions include 109–111 (YIN) and Ser-126. Cys-169 contributes to the [4Fe-4S] cluster binding site. Residues 195 to 197 (HPE) and Thr-212 each bind iminosuccinate. Cys-257 is a [4Fe-4S] cluster binding site.

It belongs to the quinolinate synthase family. Type 2 subfamily. [4Fe-4S] cluster is required as a cofactor.

Its subcellular location is the cytoplasm. It carries out the reaction iminosuccinate + dihydroxyacetone phosphate = quinolinate + phosphate + 2 H2O + H(+). It participates in cofactor biosynthesis; NAD(+) biosynthesis; quinolinate from iminoaspartate: step 1/1. Catalyzes the condensation of iminoaspartate with dihydroxyacetone phosphate to form quinolinate. This chain is Quinolinate synthase, found in Clostridium perfringens (strain SM101 / Type A).